The chain runs to 635 residues: MSQVLTPLLDRVCFPQDLRALPESYLVQLANELRTETIDAVSVTGGHLGAGLGVVELTVALHYIFNTPEDRIIWDVGHQTYPHKILTGRREKIRTLRQEGGLSGFTKRVESVYDPFGAGHSSTSISAGLGMAVASALKEEKKRKVIAVIGDGAMSAGMAYEAMNNAGALNARLIVILNDNDMSIAPPTGSMSAHLARLVSRPSYRHLRERVKMLSEKLPKFFWDKARRSEEFARGLLVGGTLFDELGFYYVGPIDGHNLGHLLPVLKNVREYPHGPVLVHVVTHKGKGYPPAEASSDKYHGVNRFDVTTGKQVKASSNILPYTKVFSKALVEEACHDDKIVGITAAMPTGTGLDSFAEKFPEKMFDVGIAEQHAVTFAAGLACEGYKPFVAIYSTFLQRAYDQIIHDVSIQKLPVRFAIDRAGFVGADGATHAGSFDIVFLATLPEFVVMAPSDELELMHMVRTAAAYDQGPISFRYPRGEGIGIDLPQRGEILEIGKGRVLREGNRIALVCFGTRMSEVLRAADRLGAKGLSTTVADARFAKPLDKDLMRRLAREHEVLVTIEEGAIGGFGAHLLQFLAQEGLLEHGLKVRTLKFPDEYLNHGSPEKVLSTIGLDAMGIVNTVLTVVGREIRME.

Residues His-78 and 119–121 each bind thiamine diphosphate; that span reads GHS. Asp-151 lines the Mg(2+) pocket. Residues 152–153, Asn-180, Tyr-289, and Glu-371 each bind thiamine diphosphate; that span reads GA. Position 180 (Asn-180) interacts with Mg(2+).

This sequence belongs to the transketolase family. DXPS subfamily. Homodimer. Mg(2+) is required as a cofactor. Requires thiamine diphosphate as cofactor.

The catalysed reaction is D-glyceraldehyde 3-phosphate + pyruvate + H(+) = 1-deoxy-D-xylulose 5-phosphate + CO2. It functions in the pathway metabolic intermediate biosynthesis; 1-deoxy-D-xylulose 5-phosphate biosynthesis; 1-deoxy-D-xylulose 5-phosphate from D-glyceraldehyde 3-phosphate and pyruvate: step 1/1. In terms of biological role, catalyzes the acyloin condensation reaction between C atoms 2 and 3 of pyruvate and glyceraldehyde 3-phosphate to yield 1-deoxy-D-xylulose-5-phosphate (DXP). This is 1-deoxy-D-xylulose-5-phosphate synthase from Bartonella tribocorum (strain CIP 105476 / IBS 506).